The primary structure comprises 155 residues: Endoribonuclease YbeY (155 aa).

Residues H114, H118, and H124 each contribute to the Zn(2+) site.

The protein belongs to the endoribonuclease YbeY family. The cofactor is Zn(2+).

The protein resides in the cytoplasm. Single strand-specific metallo-endoribonuclease involved in late-stage 70S ribosome quality control and in maturation of the 3' terminus of the 16S rRNA. The chain is Endoribonuclease YbeY from Escherichia coli O7:K1 (strain IAI39 / ExPEC).